A 645-amino-acid chain; its full sequence is Heat shock protein SSA2 (645 aa).

N-acetylserine is present on Ser2. The tract at residues Ala581–Asp645 is disordered. Residues Ala611–Ala621 are compositionally biased toward low complexity.

Belongs to the heat shock protein 70 family. In terms of assembly, binds human histatin-5, an antifungal peptide from saliva.

The protein resides in the cytoplasm. It localises to the secreted. Its subcellular location is the cell wall. Its function is as follows. Heat shock protein that may play a role in the transport of polypeptides both across the mitochondrial membranes and into the endoplasmic reticulum. In terms of biological role, acts as a highly immunodominant antigen. Plays a role in the sensitivity to, and the import of candidacidal beta-defensin peptides. HSP70/SSA1 and SSA2 bind histatin-5, a peptide from human saliva, and mediates its fungicidal activity. SSA2 facilitates fungicidal activity of Hst 5 in binding and intracellular translocation, whereas HSP70/SSA1 appears to have a lesser functional role in Hst 5 toxicity. This Candida albicans (strain SC5314 / ATCC MYA-2876) (Yeast) protein is Heat shock protein SSA2.